A 210-amino-acid polypeptide reads, in one-letter code: Thymidylate kinase (210 aa).

10–17 (GPEGAGKS) lines the ATP pocket.

Belongs to the thymidylate kinase family.

It catalyses the reaction dTMP + ATP = dTDP + ADP. In terms of biological role, phosphorylation of dTMP to form dTDP in both de novo and salvage pathways of dTTP synthesis. The sequence is that of Thymidylate kinase from Pseudomonas putida (strain GB-1).